The chain runs to 151 residues: Endoribonuclease YbeY (151 aa).

Residues His-114, His-118, and His-124 each contribute to the Zn(2+) site.

Belongs to the endoribonuclease YbeY family. Zn(2+) serves as cofactor.

The protein localises to the cytoplasm. Single strand-specific metallo-endoribonuclease involved in late-stage 70S ribosome quality control and in maturation of the 3' terminus of the 16S rRNA. This Hamiltonella defensa subsp. Acyrthosiphon pisum (strain 5AT) protein is Endoribonuclease YbeY.